A 661-amino-acid chain; its full sequence is Coagulation factor XIII B chain (661 aa).

A signal peptide spans 1-20; it reads MRLKNLTFIIILIISGELYA. 10 consecutive Sushi domains span residues 24-88, 89-148, 151-210, 211-269, 272-329, 334-391, 394-452, 453-516, 522-580, and 581-647; these read PCGF…PRCF, KKCT…TCRK, ETCL…KCTK, LKCS…VCEG, NRCP…KCIE, VACE…ECVE, ENCK…VCLE, PCTV…PLCT, GMCT…LCLE, and PCTL…PRCI. 20 cysteine pairs are disulfide-bonded: Cys-25/Cys-76, Cys-59/Cys-87, Cys-91/Cys-135, Cys-118/Cys-146, Cys-153/Cys-197, Cys-180/Cys-208, Cys-213/Cys-255, Cys-241/Cys-267, Cys-274/Cys-316, Cys-302/Cys-327, Cys-336/Cys-378, Cys-364/Cys-389, Cys-396/Cys-439, Cys-425/Cys-450, Cys-454/Cys-505, Cys-486/Cys-515, Cys-524/Cys-567, Cys-553/Cys-578, Cys-582/Cys-636, and Cys-616/Cys-646. An N-linked (GlcNAc...) asparagine glycan is attached at Asn-162. N-linked (GlcNAc...) asparagine glycosylation occurs at Asn-545. Residues 617–619 carry the Cell attachment site motif; the sequence is RGD.

Tetramer of two A chains (F13A1) and two B (F13B) chains.

Its subcellular location is the secreted. In terms of biological role, the B chain of factor XIII is not catalytically active, but is thought to stabilize the A subunits and regulate the rate of transglutaminase formation by thrombin. The chain is Coagulation factor XIII B chain (F13B) from Homo sapiens (Human).